An 822-amino-acid polypeptide reads, in one-letter code: Endonuclease MutS2 (822 aa).

348-355 (GPNTGGKT) is an ATP binding site. The interval 707–737 (SLNGKKVEPPPKSEPVPKKVKAEPPATEAKS) is disordered. Basic and acidic residues predominate over residues 709–728 (NGKKVEPPPKSEPVPKKVKA). The 74-residue stretch at 749–822 (LDCRGDRLER…GAGVTIAYLR (74 aa)) folds into the Smr domain.

This sequence belongs to the DNA mismatch repair MutS family. MutS2 subfamily. As to quaternary structure, homodimer. Binds to stalled ribosomes, contacting rRNA.

Functionally, endonuclease that is involved in the suppression of homologous recombination and thus may have a key role in the control of bacterial genetic diversity. In terms of biological role, acts as a ribosome collision sensor, splitting the ribosome into its 2 subunits. Detects stalled/collided 70S ribosomes which it binds and splits by an ATP-hydrolysis driven conformational change. Acts upstream of the ribosome quality control system (RQC), a ribosome-associated complex that mediates the extraction of incompletely synthesized nascent chains from stalled ribosomes and their subsequent degradation. Probably generates substrates for RQC. This Synechocystis sp. (strain ATCC 27184 / PCC 6803 / Kazusa) protein is Endonuclease MutS2.